Consider the following 308-residue polypeptide: Ycf92-like protein (308 aa).

The next 5 helical transmembrane spans lie at 41–61, 75–95, 153–173, 192–212, and 288–308; these read FANN…TLIA, LLTL…GLGV, ISTI…TTAP, IPVT…PLVL, and WLAI…GNQI.

It belongs to the ycf92 family.

It is found in the membrane. This chain is Ycf92-like protein, found in Nostoc sp. (strain PCC 7120 / SAG 25.82 / UTEX 2576).